The chain runs to 297 residues: MKKAEGTIISAISGYYDVEIDNKVVRTRARGVFRDRKQKPLVGDRVVVQLDDQGMNYLIEILPRINEIGRPAVANVSRVLLVISAVEPDFSLELLDRYLTFFAWKNVGVVIYLSKSDITSSERLKDIQTELEYYQRIGYPVFEDAEKLENELPKMIDKDQIWTLAGQSGAGKSTLLNQLESEAKQVTGAISTALNRGKHTTRQVTLFKYGSGFIADTPGFSAIDLFKIKVDDLRNYFYDLKEASANCKFRGCQHIKEPGCEVKKLVEEGKIARSRYESYLKIRQEISDNRMPEYLKK.

Residues 65 to 223 (INEIGRPAVA…IADTPGFSAI (159 aa)) enclose the CP-type G domain. GTP-binding positions include 114 to 117 (SKSD) and 166 to 174 (GQSGAGKST). The Zn(2+) site is built by Cys247, Cys252, His254, and Cys260.

It belongs to the TRAFAC class YlqF/YawG GTPase family. RsgA subfamily. In terms of assembly, monomer. Associates with 30S ribosomal subunit, binds 16S rRNA. Zn(2+) is required as a cofactor.

It localises to the cytoplasm. In terms of biological role, one of several proteins that assist in the late maturation steps of the functional core of the 30S ribosomal subunit. Helps release RbfA from mature subunits. May play a role in the assembly of ribosomal proteins into the subunit. Circularly permuted GTPase that catalyzes slow GTP hydrolysis, GTPase activity is stimulated by the 30S ribosomal subunit. This chain is Small ribosomal subunit biogenesis GTPase RsgA, found in Lactobacillus johnsonii (strain CNCM I-12250 / La1 / NCC 533).